Here is a 262-residue protein sequence, read N- to C-terminus: Sulfur carrier protein FdhD (262 aa).

C107 functions as the Cysteine persulfide intermediate in the catalytic mechanism.

Belongs to the FdhD family.

The protein localises to the cytoplasm. Functionally, required for formate dehydrogenase (FDH) activity. Acts as a sulfur carrier protein that transfers sulfur from IscS to the molybdenum cofactor prior to its insertion into FDH. This Bacillus subtilis (strain 168) protein is Sulfur carrier protein FdhD.